The primary structure comprises 374 residues: Glutamate 5-kinase (374 aa).

Residue lysine 9 participates in ATP binding. Substrate-binding residues include serine 49, aspartate 136, and asparagine 148. Residues 168 to 169 and 210 to 216 contribute to the ATP site; these read TD and TGGMKSK. A PUA domain is found at 276-354; that stretch reads SGVVRIDQGA…DEAKQLIPLV (79 aa).

This sequence belongs to the glutamate 5-kinase family.

It is found in the cytoplasm. The enzyme catalyses L-glutamate + ATP = L-glutamyl 5-phosphate + ADP. It participates in amino-acid biosynthesis; L-proline biosynthesis; L-glutamate 5-semialdehyde from L-glutamate: step 1/2. Its function is as follows. Catalyzes the transfer of a phosphate group to glutamate to form L-glutamate 5-phosphate. This is Glutamate 5-kinase from Halalkalibacterium halodurans (strain ATCC BAA-125 / DSM 18197 / FERM 7344 / JCM 9153 / C-125) (Bacillus halodurans).